The following is a 155-amino-acid chain: Small ribosomal subunit protein uS7 (155 aa).

It belongs to the universal ribosomal protein uS7 family. Part of the 30S ribosomal subunit. Contacts proteins S9 and S11.

In terms of biological role, one of the primary rRNA binding proteins, it binds directly to 16S rRNA where it nucleates assembly of the head domain of the 30S subunit. Is located at the subunit interface close to the decoding center, probably blocks exit of the E-site tRNA. The sequence is that of Small ribosomal subunit protein uS7 from Halorhodospira halophila (strain DSM 244 / SL1) (Ectothiorhodospira halophila (strain DSM 244 / SL1)).